Here is a 344-residue protein sequence, read N- to C-terminus: Dihydroorotate dehydrogenase (quinone) (344 aa).

FMN contacts are provided by residues 61–65 (AGLDK) and T85. Substrate is bound at residue K65. Residue 110–114 (NRMGF) participates in substrate binding. Residues N138 and N171 each coordinate FMN. Substrate is bound at residue N171. The Nucleophile role is filled by S174. N176 lines the substrate pocket. FMN contacts are provided by K216 and T244. 245 to 246 (NT) contributes to the substrate binding site. Residues G267, G296, and 317–318 (YS) each bind FMN.

The protein belongs to the dihydroorotate dehydrogenase family. Type 2 subfamily. As to quaternary structure, monomer. The cofactor is FMN.

It localises to the cell membrane. It carries out the reaction (S)-dihydroorotate + a quinone = orotate + a quinol. The protein operates within pyrimidine metabolism; UMP biosynthesis via de novo pathway; orotate from (S)-dihydroorotate (quinone route): step 1/1. Functionally, catalyzes the conversion of dihydroorotate to orotate with quinone as electron acceptor. The chain is Dihydroorotate dehydrogenase (quinone) from Psychrobacter arcticus (strain DSM 17307 / VKM B-2377 / 273-4).